Here is a 72-residue protein sequence, read N- to C-terminus: Translation initiation factor IF-1 1 (72 aa).

The S1-like domain maps to 1–72; that stretch reads MSKEDVIQMQ…TKGRIVFRAK (72 aa).

Belongs to the IF-1 family. Component of the 30S ribosomal translation pre-initiation complex which assembles on the 30S ribosome in the order IF-2 and IF-3, IF-1 and N-formylmethionyl-tRNA(fMet); mRNA recruitment can occur at any time during PIC assembly.

The protein resides in the cytoplasm. In terms of biological role, one of the essential components for the initiation of protein synthesis. Stabilizes the binding of IF-2 and IF-3 on the 30S subunit to which N-formylmethionyl-tRNA(fMet) subsequently binds. Helps modulate mRNA selection, yielding the 30S pre-initiation complex (PIC). Upon addition of the 50S ribosomal subunit IF-1, IF-2 and IF-3 are released leaving the mature 70S translation initiation complex. The chain is Translation initiation factor IF-1 1 from Thiobacillus denitrificans (strain ATCC 25259 / T1).